A 410-amino-acid chain; its full sequence is Aminopeptidase AmpS (410 aa).

A divalent metal cation contacts are provided by E250, E316, E340, H345, H378, and D380.

It belongs to the peptidase M29 family. Requires Co(2+) as cofactor. It depends on Zn(2+) as a cofactor. Mg(2+) is required as a cofactor.

Functionally, metal-dependent exopeptidase. The protein is Aminopeptidase AmpS (ampS) of Bacillus subtilis (strain 168).